A 509-amino-acid chain; its full sequence is tRNA (guanine(37)-N(1))-methyltransferase (509 aa).

A mitochondrion-targeting transit peptide spans 1–57 (MVLWILWRPFGFSRRLLKLERHSITESKSLIPLAWTSLTQTLSESPGIFLLGQRKRF). Residues His-289, 327-328 (DL), 355-356 (DG), and Asn-387 contribute to the S-adenosyl-L-methionine site. The interval 478–509 (TKNPENHEDPPLKRQRTAEAFSDEKTQIASNT) is disordered.

It belongs to the class I-like SAM-binding methyltransferase superfamily. TRM5/TYW2 family. As to quaternary structure, monomer.

It is found in the mitochondrion matrix. The protein resides in the nucleus. Its subcellular location is the cytoplasm. The catalysed reaction is guanosine(37) in tRNA + S-adenosyl-L-methionine = N(1)-methylguanosine(37) in tRNA + S-adenosyl-L-homocysteine + H(+). In terms of biological role, involved in mitochondrial tRNA methylation. Specifically methylates the N1 position of guanosine-37 in various tRNAs. Methylation is not dependent on the nature of the nucleoside 5' of the target nucleoside. This is the first step in the biosynthesis of wybutosine (yW), a modified base adjacent to the anticodon of tRNAs and required for accurate decoding. The polypeptide is tRNA (guanine(37)-N(1))-methyltransferase (Macaca mulatta (Rhesus macaque)).